Reading from the N-terminus, the 76-residue chain is MSKDQQSFEEMMQELENIVQKLDNETVSLEESLELYQRGMKLSATCDATLKDAEKKVNQLIKDEAEDEENGKEVNE.

This sequence belongs to the XseB family. Heterooligomer composed of large and small subunits.

It is found in the cytoplasm. The enzyme catalyses Exonucleolytic cleavage in either 5'- to 3'- or 3'- to 5'-direction to yield nucleoside 5'-phosphates.. Its function is as follows. Bidirectionally degrades single-stranded DNA into large acid-insoluble oligonucleotides, which are then degraded further into small acid-soluble oligonucleotides. In Staphylococcus haemolyticus (strain JCSC1435), this protein is Exodeoxyribonuclease 7 small subunit.